The primary structure comprises 374 residues: MRAVIVAVGVAFLVSLFCTPIAIRVFTRLKAGQPIRAEGPVMHQGKKGTPTMGGVVFILATVIAYVAGHLALTTLPDAQIAQVEPTITALVLLGLMVFSGAVGFIDDFLKVRKRHSGGLNKRGKLLGQILVGAVFGVIALYFPSTMTDAQGTLTNTETVGSTTLSFIRDIPALELTKVGAVVLFIFVVMAATNGVNLTDGLDGLATGASVMVLAAYALIAFWQYRHWCADPNYTQDYCYSVRDPLEIALIAGAAAGACVGFLWWNTSPARIFMGDTGALGLGGLIAGMAMSTRTILLLPIIGGLFVIITMSVVIQIISFRTTGKRVFRMSPLQHHFELAGWSEVNIVVRFWIIAGIGVAIALGLFYSEFLASVG.

10 helical membrane passes run 3 to 23, 52 to 72, 85 to 105, 125 to 145, 170 to 190, 201 to 221, 244 to 264, 271 to 291, 294 to 314, and 350 to 370; these read AVIV…PIAI, MGGV…HLAL, PTIT…VGFI, LLGQ…FPST, IPAL…VVMA, LDGL…LIAF, PLEI…FLWW, IFMG…MAMS, TILL…SVVI, and FWII…SEFL.

This sequence belongs to the glycosyltransferase 4 family. MraY subfamily. The cofactor is Mg(2+).

It is found in the cell membrane. The enzyme catalyses UDP-N-acetyl-alpha-D-muramoyl-L-alanyl-gamma-D-glutamyl-meso-2,6-diaminopimeloyl-D-alanyl-D-alanine + di-trans,octa-cis-undecaprenyl phosphate = di-trans,octa-cis-undecaprenyl diphospho-N-acetyl-alpha-D-muramoyl-L-alanyl-D-glutamyl-meso-2,6-diaminopimeloyl-D-alanyl-D-alanine + UMP. Its pathway is cell wall biogenesis; peptidoglycan biosynthesis. In terms of biological role, catalyzes the initial step of the lipid cycle reactions in the biosynthesis of the cell wall peptidoglycan: transfers peptidoglycan precursor phospho-MurNAc-pentapeptide from UDP-MurNAc-pentapeptide onto the lipid carrier undecaprenyl phosphate, yielding undecaprenyl-pyrophosphoryl-MurNAc-pentapeptide, known as lipid I. In Salinispora arenicola (strain CNS-205), this protein is Phospho-N-acetylmuramoyl-pentapeptide-transferase.